Here is a 54-residue protein sequence, read N- to C-terminus: Ovomucoid (54 aa).

The Kazal-like domain occupies 4-54; the sequence is VDCSEYPKPVCSLEYMPLCGSDSQTYSNECNFCNAVVDSNGTLTLSHFGKC. 3 disulfide bridges follow: C6-C36, C14-C33, and C22-C54. N43 carries N-linked (GlcNAc...) asparagine glycosylation.

It localises to the secreted. The protein is Ovomucoid of Caracara plancus (Southern caracara).